Here is a 224-residue protein sequence, read N- to C-terminus: Urease accessory protein UreF (224 aa).

It belongs to the UreF family. In terms of assembly, ureD, UreF and UreG form a complex that acts as a GTP-hydrolysis-dependent molecular chaperone, activating the urease apoprotein by helping to assemble the nickel containing metallocenter of UreC. The UreE protein probably delivers the nickel.

The protein localises to the cytoplasm. Its function is as follows. Required for maturation of urease via the functional incorporation of the urease nickel metallocenter. The protein is Urease accessory protein UreF of Pseudomonas putida (strain W619).